We begin with the raw amino-acid sequence, 391 residues long: Ribonuclease 3-like protein 2 (391 aa).

The Nuclear export signal signature appears at 7-26 (PEYNFPAITRCSLSNSLPHR). Residues 60 to 203 (MEAVEKILNY…LAGAVYVDVN (144 aa)) enclose the RNase III domain. 3 residues coordinate Mg(2+): glutamate 96, aspartate 189, and glutamate 192. DRBM domains follow at residues 218–294 (EPIV…KLSE) and 313–387 (HAKT…ALRK). Cysteine 240 and cysteine 322 are oxidised to a cystine. A Bipartite nuclear localization motif is present at residues 371–387 (KKAESSSAYHMIRALRK).

In terms of assembly, homodimer; disulfide-linked. Requires Mg(2+) as cofactor. Mn(2+) serves as cofactor. In terms of tissue distribution, expressed in seeds, leaves and flower buds.

The protein localises to the nucleus. It is found in the cytoplasm. In terms of biological role, ribonuclease that cleaves double-stranded RNA (dsRNA). Required for 3'-external transcribed spacer (ETS) cleavage of the pre-rRNA precursors. May promote the production of 21 nucleotide small interfering RNA (siRNA) during post-transcriptional gene silencing (PTGS). In Arabidopsis thaliana (Mouse-ear cress), this protein is Ribonuclease 3-like protein 2 (RTL2).